The sequence spans 206 residues: High-affinity nitrate transporter-activating protein 2.1 (206 aa).

An N-terminal signal peptide occupies residues 1-27 (MARLAGVAALSLVLVLLGAGVPRPAAA). A helical transmembrane segment spans residues 180–200 (VAAGVFSTFSIAALAFFFVVE).

This sequence belongs to the NAR2 family. In terms of assembly, heterotetramer composed of two NRT2.1, NRT2.2 or NRT2.3 and two NAR2.1. Interacts with NRT2.1, NRT2.2 and isoform 1 of NRT2.3. In terms of tissue distribution, expressed in epidermal cells of primary and lateral roots, root-shoot junction zone, vascular tissues of adventitious root primordia, stems and coleoptiles of germinating seeds.

It is found in the cell membrane. Functionally, acts as a dual component transporter with NTR2.1, NRT2.2 and NRT2.3. Required for high-affinity nitrate transport. Involved in the regulation of NRT2.1, NRT2.2 and NRT2.3 expression, and in both, HATS (high-affinity transport system) and LATS (low-affinity transport system) activities in plant roots. Imports nitrate with high affinity when expressed with NTR2.1, NTR2.2 or NTR2.3 in a heterologous system (Xenopus oocytes). The chain is High-affinity nitrate transporter-activating protein 2.1 (NAR2.1) from Oryza sativa subsp. japonica (Rice).